The chain runs to 160 residues: Phosphopantetheine adenylyltransferase (160 aa).

Ser-9 is a substrate binding site. Residues 9–10 (SF) and His-17 contribute to the ATP site. Lys-41, Thr-73, and Arg-87 together coordinate substrate. Residues 88-90 (GMR), Glu-98, and 123-129 (YTFFSSS) contribute to the ATP site.

This sequence belongs to the bacterial CoaD family. Homohexamer. Requires Mg(2+) as cofactor.

Its subcellular location is the cytoplasm. The enzyme catalyses (R)-4'-phosphopantetheine + ATP + H(+) = 3'-dephospho-CoA + diphosphate. Its pathway is cofactor biosynthesis; coenzyme A biosynthesis; CoA from (R)-pantothenate: step 4/5. Its function is as follows. Reversibly transfers an adenylyl group from ATP to 4'-phosphopantetheine, yielding dephospho-CoA (dPCoA) and pyrophosphate. This chain is Phosphopantetheine adenylyltransferase, found in Roseiflexus castenholzii (strain DSM 13941 / HLO8).